The following is an 80-amino-acid chain: Bowman-Birk type proteinase inhibitor DE-4 (80 aa).

Residues 1 to 10 (DDDHSDDEPR) show a composition bias toward acidic residues. Residues 1 to 29 (DDDHSDDEPRESESSKPCCSSCCTRSRPP) are disordered. Over residues 15–29 (SKPCCSSCCTRSRPP) the composition is skewed to low complexity. Intrachain disulfides connect Cys18–Cys71, Cys19–Cys33, Cys22–Cys67, Cys23–Cys31, Cys41–Cys48, Cys45–Cys60, and Cys50–Cys58.

Belongs to the Bowman-Birk serine protease inhibitor family.

The polypeptide is Bowman-Birk type proteinase inhibitor DE-4 (Philenoptera violacea (Apple-leaf)).